A 146-amino-acid polypeptide reads, in one-letter code: Angiogenin (146 aa).

Positions 1–24 (MVMGLHLLFLVFILGLGLTPPTLA) are cleaved as a signal peptide. Residue Gln-25 is modified to Pyrrolidone carboxylic acid. His-37 serves as the catalytic Proton acceptor. 3 cysteine pairs are disulfide-bonded: Cys-50-Cys-105, Cys-63-Cys-116, and Cys-81-Cys-131. A Nucleolar localization signal motif is present at residues 55-59 (RLRNM). Positions 105 and 127 each coordinate tRNA. The active-site Proton donor is His-138.

The protein belongs to the pancreatic ribonuclease family. In terms of assembly, homodimer. Interacts with RNH1; inhibiting ANG ribonuclease activity. Interacts with PCNA.

It is found in the secreted. It localises to the nucleus. The protein resides in the nucleolus. Its subcellular location is the cytoplasm. The protein localises to the stress granule. Has weak tRNA ribonuclease activity by itself due to partial autoinhibition by its C-terminus, which folds into a short alpha-helix that partially occludes the substrate-binding site. In absence of stress, the ribonuclease activity is inhibited by RNH1 in the cytoplasm. In response to stress, dissociates from RNH1 in the cytoplasm and associates with cytoplasmic ribosomes with vacant A-sites: ribosomes directly activate the tRNA ribonuclease activity of ANG by refolding the C-terminal alpha-helix. In response to stress, the angiogenic activity of ANG is inhibited by RNH1 in the nucleus. Secreted ribonuclease that can either promote or restrict cell proliferation of target cells, depending on the context. Endocytosed in target cells via its receptor PLXNB2 and translocates to the cytoplasm or nucleus. Under stress conditions, localizes to the cytoplasm and promotes the assembly of stress granules (SGs): specifically cleaves a subset of tRNAs within anticodon loops to produce tRNA-derived stress-induced fragments (tiRNAs), resulting in translation repression and inhibition of cell proliferation. tiRNas also prevent formation of apoptosome, thereby promoting cell survival. Preferentially cleaves RNAs between a pyrimidine and an adenosine residue, suggesting that it cleaves the anticodon loop of tRNA(Ala) (32-UUAGCAU-38) after positions 33 and 36. Cleaves a subset of tRNAs, including tRNA(Ala), tRNA(Glu), tRNA(Gly), tRNA(Lys), tRNA(Val), tRNA(His), tRNA(Asp) and tRNA(Sec). Under growth conditions and in differentiated cells, translocates to the nucleus and stimulates ribosomal RNA (rRNA) transcription, including that containing the initiation site sequences of 45S rRNA, thereby promoting cell growth and proliferation. Angiogenin induces vascularization of normal and malignant tissues via its ability to promote rRNA transcription. Involved in hematopoietic stem and progenitor cell (HSPC) growth and survival by promoting rRNA transcription in growth conditions and inhibiting translation in response to stress, respectively. Mediates the crosstalk between myeloid and intestinal epithelial cells to protect the intestinal epithelial barrier integrity: secreted by myeloid cells and promotes intestinal epithelial cells proliferation and survival. Also mediates osteoclast-endothelial cell crosstalk in growing bone: produced by osteoclasts and protects the neighboring vascular cells against senescence by promoting rRNA transcription. The polypeptide is Angiogenin (ANG) (Saguinus oedipus (Cotton-top tamarin)).